We begin with the raw amino-acid sequence, 184 residues long: Phosphodiesterase YfcE (184 aa).

Residues D9, H11, D37, N73, H105, H127, and H129 each coordinate Mn(2+).

This sequence belongs to the metallophosphoesterase superfamily. YfcE family. The cofactor is Mn(2+).

In terms of biological role, shows phosphodiesterase activity. This is Phosphodiesterase YfcE (yfcE) from Escherichia coli O157:H7.